Reading from the N-terminus, the 632-residue chain is Extracellular metalloproteinase 2 (632 aa).

An N-terminal signal peptide occupies residues Met1–Gly19. Positions Leu20–Ser244 are excised as a propeptide. N-linked (GlcNAc...) asparagine glycosylation is present at Asn270. His429 is a Zn(2+) binding site. Glu430 is a catalytic residue. Residue His433 participates in Zn(2+) binding.

It belongs to the peptidase M36 family. Zn(2+) is required as a cofactor.

The protein resides in the secreted. In terms of biological role, secreted metalloproteinase that allows assimilation of proteinaceous substrates and probably acts as a virulence factor. This Arthroderma gypseum (strain ATCC MYA-4604 / CBS 118893) (Microsporum gypseum) protein is Extracellular metalloproteinase 2 (MEP2).